The primary structure comprises 81 residues: Prophage excisionase-like protein (81 aa).

The protein to lambdoid phages excisionases.

This is Prophage excisionase-like protein (xisE) from Escherichia coli (strain K12).